A 184-amino-acid polypeptide reads, in one-letter code: ATP synthase subunit delta (184 aa).

It belongs to the ATPase delta chain family. F-type ATPases have 2 components, F(1) - the catalytic core - and F(0) - the membrane proton channel. F(1) has five subunits: alpha(3), beta(3), gamma(1), delta(1), epsilon(1). CF(0) has four main subunits: a(1), b(1), b'(1) and c(10-14). The alpha and beta chains form an alternating ring which encloses part of the gamma chain. F(1) is attached to F(0) by a central stalk formed by the gamma and epsilon chains, while a peripheral stalk is formed by the delta, b and b' chains.

It is found in the cellular thylakoid membrane. F(1)F(0) ATP synthase produces ATP from ADP in the presence of a proton or sodium gradient. F-type ATPases consist of two structural domains, F(1) containing the extramembraneous catalytic core and F(0) containing the membrane proton channel, linked together by a central stalk and a peripheral stalk. During catalysis, ATP synthesis in the catalytic domain of F(1) is coupled via a rotary mechanism of the central stalk subunits to proton translocation. In terms of biological role, this protein is part of the stalk that links CF(0) to CF(1). It either transmits conformational changes from CF(0) to CF(1) or is implicated in proton conduction. The sequence is that of ATP synthase subunit delta from Gloeothece citriformis (strain PCC 7424) (Cyanothece sp. (strain PCC 7424)).